The chain runs to 365 residues: Putrescine carbamoyltransferase (365 aa).

Residues 54 to 58, R105, and H132 contribute to the carbamoyl phosphate site; that span reads STRTR. 277-280 is a putrescine binding site; it reads HCLP.

The protein belongs to the aspartate/ornithine carbamoyltransferase superfamily. PTCase family. In terms of assembly, homotrimer.

It localises to the cytoplasm. The catalysed reaction is carbamoyl phosphate + putrescine = N-carbamoylputrescine + phosphate + H(+). Its pathway is amine and polyamine biosynthesis; putrescine biosynthesis via agmatine pathway; putrescine from N-carbamoylputrescine (transferase route): step 1/1. Its function is as follows. Catalyzes the phosphorolysis of N-carbamoylputrescine to form carbamoyl phosphate and putrescine. Is involved in the degradation pathway of the polyamine agmatine. This Mycoplasma mycoides subsp. mycoides SC (strain CCUG 32753 / NCTC 10114 / PG1) protein is Putrescine carbamoyltransferase.